The chain runs to 423 residues: Glucose-1-phosphate adenylyltransferase 1 (423 aa).

Alpha-D-glucose 1-phosphate is bound by residues tyrosine 111, glycine 176, 191–192, and serine 209; that span reads EK.

This sequence belongs to the bacterial/plant glucose-1-phosphate adenylyltransferase family. In terms of assembly, homotetramer.

The catalysed reaction is alpha-D-glucose 1-phosphate + ATP + H(+) = ADP-alpha-D-glucose + diphosphate. Its pathway is glycan biosynthesis; glycogen biosynthesis. Its function is as follows. Involved in the biosynthesis of ADP-glucose, a building block required for the elongation reactions to produce glycogen. Catalyzes the reaction between ATP and alpha-D-glucose 1-phosphate (G1P) to produce pyrophosphate and ADP-Glc. This Alkalilimnicola ehrlichii (strain ATCC BAA-1101 / DSM 17681 / MLHE-1) protein is Glucose-1-phosphate adenylyltransferase 1.